A 291-amino-acid polypeptide reads, in one-letter code: MTFQELITNLTDFWIKQGCILAQPYDVEVGAGTMNPNTFFRVLGPEPWRVVYVEPSRRPADGRYGENPNRLYMHHQMQVILKPAPFNVQDLYLQSLEAIGISLSEHDVRFVEDNWESPTLGAWGIGWEVWLDGMEITQFTYFQQAGGYDLSVVPAELTYGLERIAMYLQRVENVFDLKWSEDITYGEMRKTEEYQHCVYAFEESDVNKLRSWFDSYEDEAMRLIDKGLTLPAYDYVLKCSHTFNLLDARGGFSAAERSSYVLRIRKLSSRIAKQWLKEREEKEFPLMGRWN.

Belongs to the class-II aminoacyl-tRNA synthetase family. Tetramer of two alpha and two beta subunits.

The protein resides in the cytoplasm. It carries out the reaction tRNA(Gly) + glycine + ATP = glycyl-tRNA(Gly) + AMP + diphosphate. This chain is Glycine--tRNA ligase alpha subunit, found in Coprothermobacter proteolyticus (strain ATCC 35245 / DSM 5265 / OCM 4 / BT).